A 272-amino-acid polypeptide reads, in one-letter code: MQLRITSRKKLTALLCALGLISIVAIYPRQTVNFFYSTAVQITDYIHFYGYRPVKSFAIHIPASYTIHGIDVSRWQERIDWQRVAKMRDNGIRLQFAFIKATEGEKLVDPYFSRNWQLSRENGLLRGAYHYFSPSVAAPVQARLFLQTVDFSQGDFPAVLDVEERGKLSAKELRKRVSQWLKMVEKSTGKKPVIYSGAVFYHTNLAGYFNEYPWWVAHYYQRRPDNDGMAWRFWQHSDRGQVDGINGSVDFNVFNGTEEELQAFVDGIKETP.

Residue E163 is part of the active site.

This sequence belongs to the glycosyl hydrolase 25 family.

This is an uncharacterized protein from Escherichia coli O157:H7.